The primary structure comprises 174 residues: U1 small nuclear ribonucleoprotein C (174 aa).

The Matrin-type zinc finger occupies 4–36 (YYCDYCDKYLTHDSPSVRKSHTVGKQHKLAVQL). Composition is skewed to low complexity over residues 82-109 (QQQQ…QQGM) and 122-140 (PHQF…FQPP). The interval 82 to 174 (QQQQQQQQQQ…QHNQPTIPGL (93 aa)) is disordered. Over residues 141–163 (HHQHHPHQQHQQHQQHQHQHQHQ) the composition is skewed to basic residues. Residues 164–174 (QQHNQPTIPGL) show a composition bias toward low complexity.

This sequence belongs to the U1 small nuclear ribonucleoprotein C family. In terms of assembly, component of the U1 snRNP. The U1 snRNP is composed of the U1 snRNA and the 7 core Sm proteins SNRPB, SNRPD1, SNRPD2, SNRPD3, SNRPE, SNRPF and SNRPG that assemble in a heptameric protein ring on the Sm site of the small nuclear RNA to form the core snRNP, and at least 3 U1 snRNP-specific proteins SNRNP70/U1-70K, SNRPA/U1-A and SNRPC/U1-C. SNRPC/U1-C interacts with U1 snRNA and the 5' splice-site region of the pre-mRNA.

The protein resides in the nucleus. Component of the spliceosomal U1 snRNP, which is essential for recognition of the pre-mRNA 5' splice-site and the subsequent assembly of the spliceosome. SNRPC/U1-C is directly involved in initial 5' splice-site recognition for both constitutive and regulated alternative splicing. The interaction with the 5' splice-site seems to precede base-pairing between the pre-mRNA and the U1 snRNA. Stimulates commitment or early (E) complex formation by stabilizing the base pairing of the 5' end of the U1 snRNA and the 5' splice-site region. The protein is U1 small nuclear ribonucleoprotein C of Dictyostelium discoideum (Social amoeba).